A 471-amino-acid polypeptide reads, in one-letter code: Mitochondrial distribution and morphology protein 10 (471 aa).

3 disordered regions span residues 272 to 291 (TEMP…SNHG), 374 to 394 (ADTP…DEEN), and 436 to 455 (SWAA…GGVS). Positions 276–288 (SSSSSTSSTTTTS) are enriched in low complexity. Residues 444–455 (AGGGQSVGGGVS) are compositionally biased toward gly residues.

Belongs to the MDM10 family. As to quaternary structure, component of the ER-mitochondria encounter structure (ERMES) or MDM complex, composed of mmm1, mdm10, mdm12 and mdm34. Associates with the mitochondrial outer membrane sorting assembly machinery SAM(core) complex.

It is found in the mitochondrion outer membrane. Functionally, component of the ERMES/MDM complex, which serves as a molecular tether to connect the endoplasmic reticulum and mitochondria. Components of this complex are involved in the control of mitochondrial shape and protein biogenesis and may function in phospholipid exchange. mdm10 is involved in the late assembly steps of the general translocase of the mitochondrial outer membrane (TOM complex). Functions in the tom40-specific route of the assembly of outer membrane beta-barrel proteins, including the association of tom40 with the receptor tom22 and small TOM proteins. Can associate with the SAM(core) complex as well as the mdm12-mmm1 complex, both involved in late steps of the major beta-barrel assembly pathway, that is responsible for biogenesis of all outer membrane beta-barrel proteins. May act as a switch that shuttles between both complexes and channels precursor proteins into the tom40-specific pathway. Plays a role in mitochondrial morphology and in the inheritance of mitochondria. The chain is Mitochondrial distribution and morphology protein 10 (mdmB) from Neosartorya fischeri (strain ATCC 1020 / DSM 3700 / CBS 544.65 / FGSC A1164 / JCM 1740 / NRRL 181 / WB 181) (Aspergillus fischerianus).